The following is a 137-amino-acid chain: Large ribosomal subunit protein uL16 (137 aa).

Belongs to the universal ribosomal protein uL16 family. In terms of assembly, part of the 50S ribosomal subunit.

In terms of biological role, binds 23S rRNA and is also seen to make contacts with the A and possibly P site tRNAs. The chain is Large ribosomal subunit protein uL16 from Maricaulis maris (strain MCS10) (Caulobacter maris).